Consider the following 380-residue polypeptide: MSTTTGQVIRCKAAVAWEAGKPLVMEEVDVAPPQKMEVRLKILYTSLCHTDVYFWEAKGQNPVFPRILGHEAAGIVESVGEGVTELAPGDHVLPVFTGECKDCAHCKSEESNMCSLLRINTDRGVMINDGQSRFSINGKPIYHFVGTSTFSEYTVVHVGCVAKINPLAPLDKVCVLSCGISTGLGATLNVAKPTKGSSVAIFGLGAVGLAAAEGARIAGASRIIGVDLNASRFEQAKKFGVTEFVNPKDYSKPVQEVIAEMTDGGVDRSVECTGHIDAMISAFECVHDGWGVAVLVGVPHKEAVFKTHPMNFLNERTLKGTFFGNYKPRSDIPSVVEKYMNKELELEKFITHTLPFAEINKAFDLMLKGEGLRCIITMED.

The Zn(2+) site is built by Cys48, Thr50, His70, Cys100, Cys103, Cys106, Cys114, and Cys178. Residues Thr50 and His70 each contribute to the an alcohol site. Thr50 provides a ligand contact to NAD(+). NAD(+) is bound by residues Gly203–Gly208, Asp227, Arg232, Thr273, Val296, Val296–Val298, Phe323, and Arg373.

It belongs to the zinc-containing alcohol dehydrogenase family. Homodimer. Homotetramer. The cofactor is Zn(2+).

Its subcellular location is the cytoplasm. It carries out the reaction a primary alcohol + NAD(+) = an aldehyde + NADH + H(+). It catalyses the reaction a secondary alcohol + NAD(+) = a ketone + NADH + H(+). This Solanum tuberosum (Potato) protein is Alcohol dehydrogenase 2 (ADH2).